A 213-amino-acid chain; its full sequence is Orotate phosphoribosyltransferase (213 aa).

Residue Lys-26 coordinates 5-phospho-alpha-D-ribose 1-diphosphate. Residue 34-35 (FF) coordinates orotate. Residues 72-73 (YK), Arg-99, Lys-100, Lys-103, His-105, and 124-132 (DDVITAGTA) each bind 5-phospho-alpha-D-ribose 1-diphosphate. Orotate-binding residues include Thr-128 and Arg-156.

It belongs to the purine/pyrimidine phosphoribosyltransferase family. PyrE subfamily. In terms of assembly, homodimer. Mg(2+) is required as a cofactor.

The catalysed reaction is orotidine 5'-phosphate + diphosphate = orotate + 5-phospho-alpha-D-ribose 1-diphosphate. It functions in the pathway pyrimidine metabolism; UMP biosynthesis via de novo pathway; UMP from orotate: step 1/2. Its function is as follows. Catalyzes the transfer of a ribosyl phosphate group from 5-phosphoribose 1-diphosphate to orotate, leading to the formation of orotidine monophosphate (OMP). The chain is Orotate phosphoribosyltransferase from Vibrio vulnificus (strain YJ016).